A 1024-amino-acid chain; its full sequence is PH and SEC7 domain-containing protein 1 (1024 aa).

Residues 67–96 (CTPLRAPPSPHIAPSPWGPSSPTGQPPPGA) are disordered. The span at 71–95 (RAPPSPHIAPSPWGPSSPTGQPPPG) shows a compositional bias: pro residues. Phosphoserine occurs at positions 126 and 156. 4 disordered regions span residues 154–195 (STSD…LPNG), 250–277 (PSSG…VAVG), 307–401 (REEA…GPDS), and 434–536 (PTQS…LDST). A compositionally biased stretch (acidic residues) spans 348–365 (NEDDEAGGEEDVDDEVFE). The segment covering 445 to 463 (PPQPPAPRPDPPAPAPLAP) has biased composition (pro residues). Over residues 495–507 (PRKELPSPSHSED) the composition is skewed to basic and acidic residues. One can recognise an SEC7 domain in the interval 512–706 (GAAPLGSEPP…KALYSSIKNE (195 aa)). The residue at position 720 (Ser-720) is a Phosphoserine. Residues 756–869 (AVYKHGALVR…WITRINVVAA (114 aa)) form the PH domain. Coiled-coil stretches lie at residues 898–924 (LSQE…HRAA) and 956–983 (AALL…AGST). The disordered stretch occupies residues 976-1024 (ALAQAGSTEDGCPPPHSSPSLRPKPTSQPRAQRPGSETRAGAGSTRPKP).

Belongs to the PSD family. Interacts with ACTN1. Interacts (ARF6-bound form) with KCNK1; does not interact with KCNK1 in the absence of ARF6. As to expression, highest expression detected in brain and some expression detected also in uterus, stomach, ovary and intestine, with isoform 2 being expressed at the highest levels. In the brain, isoform 1 is highly expressed in the strata oriens, radiatum, lacunosum-moleculare of the hippocampal CA1-3 regions and the dentate molecular layer of the hippocampal formation, with lower levels detected in the neuronal cell layers and the stratum lucidum (at protein level). Not detected in tongue, thymus, spleen, lung, heart, liver and kidney.

The protein resides in the cell membrane. It localises to the cell projection. The protein localises to the ruffle. It is found in the ruffle membrane. Its subcellular location is the cleavage furrow. Its function is as follows. Guanine nucleotide exchange factor for ARF6. Isoform 2 and isoform 3 induce cytoskeletal remodeling, but lead to distinct morphological changes in HeLa cells: isoform 2 induces cell elongation and formation of actin-rich protrusions, whereas isoform 3 promotes the formation of membrane ruffles and loss of stress fibers. The sequence is that of PH and SEC7 domain-containing protein 1 (Psd) from Mus musculus (Mouse).